A 443-amino-acid chain; its full sequence is Glutamate--tRNA ligase 1 (443 aa).

The short motif at 10 to 20 (PSPTGYIHVGN) is the 'HIGH' region element. A 'KMSKS' region motif is present at residues 241 to 245 (ALSKR). Lys-244 contacts ATP.

Belongs to the class-I aminoacyl-tRNA synthetase family. Glutamate--tRNA ligase type 1 subfamily. As to quaternary structure, monomer.

It is found in the cytoplasm. The catalysed reaction is tRNA(Glu) + L-glutamate + ATP = L-glutamyl-tRNA(Glu) + AMP + diphosphate. Catalyzes the attachment of glutamate to tRNA(Glu) in a two-step reaction: glutamate is first activated by ATP to form Glu-AMP and then transferred to the acceptor end of tRNA(Glu). In Ruegeria pomeroyi (strain ATCC 700808 / DSM 15171 / DSS-3) (Silicibacter pomeroyi), this protein is Glutamate--tRNA ligase 1.